We begin with the raw amino-acid sequence, 786 residues long: DNA repair and recombination protein RAD54-like (786 aa).

A required for chromatin remodeling, strand pairing activities and coupling of ATPase activity region spans residues 2–9 (RRSLAPSQ). A Phosphothreonine modification is found at Thr-22. The region spanning 165–340 (EGKRGSFNGC…FSLVNFVNPE (176 aa)) is the Helicase ATP-binding domain. 178–185 (DEMGLGKT) is a binding site for ATP. A DEGH box motif is present at residues 291–294 (DEGH). Residues 497 to 654 (LLDFMLAAIR…NNESVEKHFT (158 aa)) form the Helicase C-terminal domain. Residues 738–786 (EAKPAATTTDEDEELSDSKRKAKKTLASDDDDDEDFVLNCSSGEEFSGF) are disordered. Residues 776 to 786 (NCSSGEEFSGF) show a composition bias toward polar residues.

The protein belongs to the SNF2/RAD54 helicase family. Interacts (via N-terminus) with spn-A/Rad51.

Its subcellular location is the nucleus. Involved in mitotic DNA repair and meiotic recombination. Functions in the recombinational DNA repair pathway. Essential for interhomolog gene conversion (GC), but may have a less important role in intersister GC than spn-A/Rad51. In the presence of DNA, spn-A/Rad51 enhances the ATPase activity of okr/Rad54. The chain is DNA repair and recombination protein RAD54-like from Drosophila grimshawi (Hawaiian fruit fly).